The chain runs to 759 residues: ARF GTPase-activating protein GIT2 (759 aa).

In terms of domain architecture, Arf-GAP spans 1 to 124; sequence MSKRLRSSEV…AFVHRLPCRD (124 aa). The C4-type zinc-finger motif lies at 11–34; sequence CADCSGPDPSWASVNRGTFLCDEC. ANK repeat units lie at residues 132–161, 166–195, and 199–228; these read DLSK…QANF, KGNT…DPGT, and SGKT…ELTD. The tract at residues 379–422 is disordered; the sequence is QHSVESQDNDQPDYDSVASDEDTDLETTASKTNRQKSLDSDLSD. A compositionally biased stretch (acidic residues) spans 385 to 403; sequence QDNDQPDYDSVASDEDTDL. Residues Ser394 and Ser397 each carry the phosphoserine modification. Thr401 is subject to Phosphothreonine. A phosphoserine mark is found at Ser415, Ser418, and Ser421. Residues 437 to 478 adopt a coiled-coil conformation; the sequence is LVASEAKIQQLMKVNNNLSDELRIMQKKLQTLQSENSNLRKQ. The segment covering 480-499 has biased composition (polar residues); that stretch reads TTNVYQVQTGSEYTDTSNHS. Disordered stretches follow at residues 480–538 and 554–643; these read TTNV…EESR and VTSS…TEDV. Tyr484 carries the phosphotyrosine modification. A compositionally biased stretch (low complexity) spans 555–569; the sequence is TSSSSLPSFPSTLSW. Phosphoserine occurs at positions 559, 562, and 570. Residues 570 to 583 show a composition bias toward basic and acidic residues; the sequence is SRDESARRASRLEK. Over residues 584-597 the composition is skewed to polar residues; that stretch reads QNSTPESDYDNTPN. Residue Thr587 is modified to Phosphothreonine. Phosphoserine is present on Ser614.

As to quaternary structure, may form heterooligomers with GIT1. Directly interacts with protein Piccolo/PCLO. Interacts with PPFIA1 and PPFIA2. Interacts with ARHGEF7. Identified in a complex with ARHGEF6 and BIN2. Interacts with PAK3. Interacts with PXN/paxillin. Interacts with TGFB1I1. Forms a complex with EFNB1 and GRB4/NCK2.

In terms of biological role, GTPase-activating protein for ADP ribosylation factor family members, including ARF1. The sequence is that of ARF GTPase-activating protein GIT2 (GIT2) from Homo sapiens (Human).